The chain runs to 254 residues: Type III pantothenate kinase (254 aa).

An ATP-binding site is contributed by 6–13 (DVGNTNIV). Residues F100 and 107–110 (GADR) contribute to the substrate site. D109 (proton acceptor) is an active-site residue. D129 contributes to the K(+) binding site. T132 is an ATP binding site. Substrate is bound at residue T184.

It belongs to the type III pantothenate kinase family. Homodimer. The cofactor is NH4(+). Requires K(+) as cofactor.

The protein localises to the cytoplasm. The catalysed reaction is (R)-pantothenate + ATP = (R)-4'-phosphopantothenate + ADP + H(+). It functions in the pathway cofactor biosynthesis; coenzyme A biosynthesis; CoA from (R)-pantothenate: step 1/5. Functionally, catalyzes the phosphorylation of pantothenate (Pan), the first step in CoA biosynthesis. The polypeptide is Type III pantothenate kinase (Moorella thermoacetica (strain ATCC 39073 / JCM 9320)).